The chain runs to 376 residues: Nuclear egress protein 1 (376 aa).

Ser-19 is subject to Phosphoserine. A disordered region spans residues 22–57 (RKRRQRELASKVASTVNGATSANNHGEPPSPADARP). Residues 33–45 (VASTVNGATSANN) show a composition bias toward polar residues. The CCCH-type zinc-finger motif lies at 106–211 (CLDISPYGNE…HVIFENPDVH (106 aa)). The tract at residues 316-376 (VVSTNGCGPS…PLFLNSIRAP (61 aa)) is disordered. Polar residues predominate over residues 317 to 332 (VSTNGCGPSSSSQSTP).

The protein belongs to the herpesviridae NEC1 protein family. As to quaternary structure, forms a heterohexameric complex with NEC2. Interacts with capsid vertex specific component 2/CVC2; this interaction directs the capsid to the host inner nuclear membrane to initiate budding. Phosphorylated at serine residues in the N-terminus. This phosphorylation regulates the localization within the inner nuclear membrane. Phosphorylation by viral kinase UL97 at Ser-19 plays an important role for correct viral nuclear egress complex (NEC) localization.

The protein resides in the host nucleus inner membrane. Plays an essential role in virion nuclear egress, the first step of virion release from infected cell. Within the host nucleus, NEC1 interacts with the newly formed capsid through the vertexes and directs it to the inner nuclear membrane by associating with NEC2. Induces the budding of the capsid at the inner nuclear membrane as well as its envelopment into the perinuclear space. There, the NEC1/NEC2 complex promotes the fusion of the enveloped capsid with the outer nuclear membrane and the subsequent release of the viral capsid into the cytoplasm where it will reach the secondary budding sites in the host Golgi or trans-Golgi network. The sequence is that of Nuclear egress protein 1 from Homo sapiens (Human).